The following is a 92-amino-acid chain: DNA-directed RNA polymerase subunit Rpo11 (92 aa).

This sequence belongs to the archaeal Rpo11/eukaryotic RPB11/RPC19 RNA polymerase subunit family. As to quaternary structure, part of the RNA polymerase complex.

The protein resides in the cytoplasm. It catalyses the reaction RNA(n) + a ribonucleoside 5'-triphosphate = RNA(n+1) + diphosphate. In terms of biological role, DNA-dependent RNA polymerase (RNAP) catalyzes the transcription of DNA into RNA using the four ribonucleoside triphosphates as substrates. This Saccharolobus islandicus (strain Y.N.15.51 / Yellowstone #2) (Sulfolobus islandicus) protein is DNA-directed RNA polymerase subunit Rpo11.